The primary structure comprises 595 residues: MSTGDTVCMGWLIKSPPERKLQRYAWRKRWFVLRRGRMSGNPDVLEYYRNKHSNKPIRVIDLSECTVWKHAGPGFIRKEFQKNFVFIVKTTSRTFYLVAKTEEEMQVWVHSISQVCNFSHLEDGADSMESLSHMPSSFQPSPASSLHTVHVANSALLKDDRNTNSVVTEETRRESEFLFLPDYLILSNCETGRLHHASLPTRCDSWSNSNHSLAQTSFDDVFLDGLQPFISNNLVHPLHHGKVSQDFPSIRPQASLIWNREINGPSRNLMSSSPLLESSLNPTVHVEEKQVSLPSGVKELNIMSNTPPPRPPKPSYLSEQRQDQPLLTGHSSNKKPGYTMVPRRISLSGLDHVGSWKGDVQSQSLRHRDKRLSLNLPCKFSPIYPTASPSAEDSYVPMSPKGTASELRPHCSQDDYIPMSSSMLPELPADLEPPPVNRNLKPQRKSRPPPLDSRNLSTIQEHTSLTRTYTVPCNRTSFLSPQRNGINCARLFSTPSEEEEEEEEEEEEEEEEEKYIQMEEYGTVSSLSRSALSWTKKFSLDYLALDFNSTSPAPVQKKLLLSEEQRVDYVQVDEQKTQALRSTKQEWTDERQSKV.

The PH domain maps to D5–N117. Positions S295–T339 are disordered. A compositionally biased stretch (polar residues) spans L317 to S331. S346 bears the Phosphoserine mark. Disordered regions lie at residues P389–R408 and P418–T463. The segment covering R454–T463 has biased composition (polar residues). The residue at position 480 (S480) is a Phosphoserine. The interval S493–E513 is disordered. Acidic residues predominate over residues S496–E513.

It belongs to the GAB family. In terms of assembly, interacts with PIK3R/p85, SHP2 and GRAP2/MONA. May interact with Grb2. In terms of processing, phosphorylated on tyrosine residue(s) after macrophage colony-stimulating factor (M-CSF) receptor stimulation. In terms of tissue distribution, highly expressed in spleen and thymus and weakly in brain, heart, lung, kidney, uterus, and embryonic stem cells. Also expressed in myeloid and macrophage cell lines.

This is GRB2-associated-binding protein 3 (Gab3) from Mus musculus (Mouse).